The chain runs to 95 residues: Co-chaperonin GroES (95 aa).

It belongs to the GroES chaperonin family. As to quaternary structure, heptamer of 7 subunits arranged in a ring. Interacts with the chaperonin GroEL.

It is found in the cytoplasm. Functionally, together with the chaperonin GroEL, plays an essential role in assisting protein folding. The GroEL-GroES system forms a nano-cage that allows encapsulation of the non-native substrate proteins and provides a physical environment optimized to promote and accelerate protein folding. GroES binds to the apical surface of the GroEL ring, thereby capping the opening of the GroEL channel. This Jannaschia sp. (strain CCS1) protein is Co-chaperonin GroES.